A 724-amino-acid polypeptide reads, in one-letter code: Catalase-peroxidase (724 aa).

Residues 1–20 (MDENKTKPAGKCPVMHGGNT) are disordered. The tryptophyl-tyrosyl-methioninium (Trp-Tyr) (with M-251) cross-link spans 98-225 (WHSAGTYRTA…LAAVQMGLIY (128 aa)). His-99 acts as the Proton acceptor in catalysis. Positions 225 to 251 (YVNPEGVDGNPDPLRTAQDMRVTFSRM) form a cross-link, tryptophyl-tyrosyl-methioninium (Tyr-Met) (with W-98). His-266 is a binding site for heme b.

Belongs to the peroxidase family. Peroxidase/catalase subfamily. As to quaternary structure, homodimer or homotetramer. Heme b serves as cofactor. Formation of the three residue Trp-Tyr-Met cross-link is important for the catalase, but not the peroxidase activity of the enzyme.

It carries out the reaction H2O2 + AH2 = A + 2 H2O. The enzyme catalyses 2 H2O2 = O2 + 2 H2O. Its function is as follows. Bifunctional enzyme with both catalase and broad-spectrum peroxidase activity. This chain is Catalase-peroxidase, found in Pectobacterium carotovorum subsp. carotovorum (strain PC1).